Reading from the N-terminus, the 86-residue chain is MAEENKTNRDDLTFEEAMKGLEQIVSKLEEGDVPLEKAIDYFQEGMALSKICHEKLQNVEKQMDFILRENGELAPFSVREEEKGDR.

This sequence belongs to the XseB family. In terms of assembly, heterooligomer composed of large and small subunits.

The protein resides in the cytoplasm. The catalysed reaction is Exonucleolytic cleavage in either 5'- to 3'- or 3'- to 5'-direction to yield nucleoside 5'-phosphates.. In terms of biological role, bidirectionally degrades single-stranded DNA into large acid-insoluble oligonucleotides, which are then degraded further into small acid-soluble oligonucleotides. The chain is Exodeoxyribonuclease 7 small subunit from Bacillus licheniformis (strain ATCC 14580 / DSM 13 / JCM 2505 / CCUG 7422 / NBRC 12200 / NCIMB 9375 / NCTC 10341 / NRRL NRS-1264 / Gibson 46).